The sequence spans 451 residues: MTRKYFGTDGIRGQANSFPMTPEVAMKVGMAVGHIFRRKGQTSRVVIGKDTRRSGYMLENALVAGFTAAGMDVFLLGPIPTPAVAMLCRSLRADIGVMISASHNPFYDNGIKLFGPDGFKLSDEIELKIEAMIDGDLTPYLASHGDVGRAKRVDGDIYRYIEFAKRTLPRNIDLNGLRIVVDCANGAGYKVAPAALWELGAEVITINNEPNGININEDCGSTHPIGLMKKVHEVRADVGIALDGDADRVLLVDENGTVIDGDQLMAVIAESWAASDRLEGGGIVATVMSNLGLERFLADRHLTLARTKVGDRYVVEHMREHGFNVGGEQSGHIVLSDYATTGDGLISALQILAVAQEQGKPISEICRKFDPVPQLLKNVRTSGGKPLENKRVKSAIDEATERLGVQGRLVIRPSGTEPLIRVMAEGDDRGLVEKVVNDIIDVISSEGSAAA.

Residue Ser-102 is the Phosphoserine intermediate of the active site. Mg(2+) is bound by residues Ser-102, Asp-243, Asp-245, and Asp-247. Ser-102 is subject to Phosphoserine.

Belongs to the phosphohexose mutase family. The cofactor is Mg(2+). In terms of processing, activated by phosphorylation.

It carries out the reaction alpha-D-glucosamine 1-phosphate = D-glucosamine 6-phosphate. Catalyzes the conversion of glucosamine-6-phosphate to glucosamine-1-phosphate. This is Phosphoglucosamine mutase from Brucella anthropi (strain ATCC 49188 / DSM 6882 / CCUG 24695 / JCM 21032 / LMG 3331 / NBRC 15819 / NCTC 12168 / Alc 37) (Ochrobactrum anthropi).